The chain runs to 222 residues: ATP-dependent dethiobiotin synthetase BioD 2 (222 aa).

T17 provides a ligand contact to Mg(2+). The active site involves K38. Substrate is bound at residue T42. Residues D55 and E112 each coordinate Mg(2+). ATP contacts are provided by residues D55, 112–115, 172–173, 201–203, and E208; these read EGCG, NR, and PYL.

It belongs to the dethiobiotin synthetase family. As to quaternary structure, homodimer. Mg(2+) is required as a cofactor.

Its subcellular location is the cytoplasm. The catalysed reaction is (7R,8S)-7,8-diammoniononanoate + CO2 + ATP = (4R,5S)-dethiobiotin + ADP + phosphate + 3 H(+). Its pathway is cofactor biosynthesis; biotin biosynthesis; biotin from 7,8-diaminononanoate: step 1/2. In terms of biological role, catalyzes a mechanistically unusual reaction, the ATP-dependent insertion of CO2 between the N7 and N8 nitrogen atoms of 7,8-diaminopelargonic acid (DAPA, also called 7,8-diammoniononanoate) to form a ureido ring. This Yersinia pestis protein is ATP-dependent dethiobiotin synthetase BioD 2.